A 482-amino-acid chain; its full sequence is tRNA sulfurtransferase (482 aa).

One can recognise a THUMP domain in the interval 61–165 (LAIRDALTRI…DDRLLLIKGR (105 aa)). Residues 183–184 (LI), K265, G287, and Q296 each bind ATP. C344 and C456 are disulfide-bonded. Residues 404 to 482 (FGPNDVILDI…GFNNVKVYRP (79 aa)) form the Rhodanese domain. The active-site Cysteine persulfide intermediate is the C456.

This sequence belongs to the ThiI family.

The protein localises to the cytoplasm. It catalyses the reaction [ThiI sulfur-carrier protein]-S-sulfanyl-L-cysteine + a uridine in tRNA + 2 reduced [2Fe-2S]-[ferredoxin] + ATP + H(+) = [ThiI sulfur-carrier protein]-L-cysteine + a 4-thiouridine in tRNA + 2 oxidized [2Fe-2S]-[ferredoxin] + AMP + diphosphate. The catalysed reaction is [ThiS sulfur-carrier protein]-C-terminal Gly-Gly-AMP + S-sulfanyl-L-cysteinyl-[cysteine desulfurase] + AH2 = [ThiS sulfur-carrier protein]-C-terminal-Gly-aminoethanethioate + L-cysteinyl-[cysteine desulfurase] + A + AMP + 2 H(+). The protein operates within cofactor biosynthesis; thiamine diphosphate biosynthesis. Functionally, catalyzes the ATP-dependent transfer of a sulfur to tRNA to produce 4-thiouridine in position 8 of tRNAs, which functions as a near-UV photosensor. Also catalyzes the transfer of sulfur to the sulfur carrier protein ThiS, forming ThiS-thiocarboxylate. This is a step in the synthesis of thiazole, in the thiamine biosynthesis pathway. The sulfur is donated as persulfide by IscS. In Escherichia coli O139:H28 (strain E24377A / ETEC), this protein is tRNA sulfurtransferase.